The primary structure comprises 165 residues: Chorismate pyruvate-lyase (165 aa).

The substrate site is built by methionine 35, arginine 77, leucine 115, and glutamate 156.

This sequence belongs to the UbiC family. In terms of assembly, monomer.

It is found in the cytoplasm. It carries out the reaction chorismate = 4-hydroxybenzoate + pyruvate. The protein operates within cofactor biosynthesis; ubiquinone biosynthesis. Its function is as follows. Removes the pyruvyl group from chorismate, with concomitant aromatization of the ring, to provide 4-hydroxybenzoate (4HB) for the ubiquinone pathway. This Shigella boydii serotype 18 (strain CDC 3083-94 / BS512) protein is Chorismate pyruvate-lyase.